Here is a 52-residue protein sequence, read N- to C-terminus: Histone H2A (52 aa).

A disordered region spans residues 1 to 25 (MSGRGKTGGKARAKAKTRSSRAGLQ). At Ser2 the chain carries N-acetylserine. Ser2 is modified (phosphoserine). An N6-(2-hydroxyisobutyryl)lysine modification is found at Lys6. The residue at position 6 (Lys6) is an N6-acetyllysine. The span at 7 to 19 (TGGKARAKAKTRS) shows a compositional bias: basic residues. The residue at position 10 (Lys10) is an N6-(2-hydroxyisobutyryl)lysine; alternate. Residue Lys10 is modified to N6-lactoyllysine; alternate. The residue at position 10 (Lys10) is an N6-succinyllysine. Glycyl lysine isopeptide (Lys-Gly) (interchain with G-Cter in ubiquitin) cross-links involve residues Lys14 and Lys16. An N6-(2-hydroxyisobutyryl)lysine; alternate modification is found at Lys37.

In terms of assembly, the nucleosome is a histone octamer containing two molecules each of H2A, H2B, H3 and H4 assembled in one H3-H4 heterotetramer and two H2A-H2B heterodimers. The octamer wraps approximately 147 bp of DNA. Post-translationally, acetylation is not necessary for the antibacterial activity. Monoubiquitination in C-terminus gives a specific tag for epigenetic transcriptional repression. Following DNA double-strand breaks (DSBs), it is ubiquitinated through 'Lys-63' linkage of ubiquitin moieties, leading to the recruitment of repair proteins to sites of DNA damage. H2AK119Ub and ionizing radiation-induced 'Lys-63'-linked ubiquitination are distinct events. In terms of processing, phosphorylation on Ser-2 is enhanced during mitosis. Phosphorylation on Ser-2 directly represses transcription.

Its subcellular location is the nucleus. The protein resides in the chromosome. It localises to the secreted. Core component of nucleosome. Nucleosomes wrap and compact DNA into chromatin, limiting DNA accessibility to the cellular machineries which require DNA as a template. Histones thereby play a central role in transcription regulation, DNA repair, DNA replication and chromosomal stability. DNA accessibility is regulated via a complex set of post-translational modifications of histones, also called histone code, and nucleosome remodeling. Its function is as follows. Hipposin shows strong antimicrobial activity against several Gram-positive and Gram-negative bacteria. In Hippoglossus hippoglossus (Atlantic halibut), this protein is Histone H2A.